The chain runs to 329 residues: Probable nicotianamine synthase 4 (329 aa).

This sequence belongs to the nicotianamine synthase (NAS)-like family.

It carries out the reaction 3 S-adenosyl-L-methionine = nicotianamine + 3 S-methyl-5'-thioadenosine + 3 H(+). Functionally, synthesizes nicotianamine, a polyamine that is the first intermediate in the synthesis of the phytosiderophores of the mugineic acid type found in gramineae which serves as a sensor for the physiological iron status within the plant, and/or might be involved in the transport of iron. This chain is Probable nicotianamine synthase 4 (NAS4), found in Hordeum vulgare (Barley).